A 228-amino-acid chain; its full sequence is Ribose-5-phosphate isomerase A (228 aa).

Substrate contacts are provided by residues 32–35 (TGST), 85–88 (DGAD), and 98–101 (KGGG). Glu107 serves as the catalytic Proton acceptor. A substrate-binding site is contributed by Lys125.

The protein belongs to the ribose 5-phosphate isomerase family. As to quaternary structure, homodimer.

The catalysed reaction is aldehydo-D-ribose 5-phosphate = D-ribulose 5-phosphate. Its pathway is carbohydrate degradation; pentose phosphate pathway; D-ribose 5-phosphate from D-ribulose 5-phosphate (non-oxidative stage): step 1/1. Its function is as follows. Catalyzes the reversible conversion of ribose-5-phosphate to ribulose 5-phosphate. This chain is Ribose-5-phosphate isomerase A, found in Cupriavidus necator (strain ATCC 17699 / DSM 428 / KCTC 22496 / NCIMB 10442 / H16 / Stanier 337) (Ralstonia eutropha).